The chain runs to 377 residues: MSDGIVIIGSGFAARQLVKNIRKQDTQIPLTLIAADSMDEYNKPDLSHVISRGQKADDLTLQSAGEFAEQYNLRLFPHTWVSDIDAENRLVKSQDNQWRYDKLVLATGATPFIPPVPGRELMLTLNSQREYGAAQSQLHDAKRVLIVGGGLIGCELAMDFCRAGKAVTVVDNSASVLAALMPPEASSRLQHRLTEMGVHLMLKAQLEGLEQTADGIRVSLDRQRAITVDAVVAAAGLRPETSLARHAGLQINRGVVVNNQLQTSDPAIYALGDCAEINGTVLPFLQPILLSAMCLSKNLLAQAGELKLPPMLVKVKTPDLPLHLAGDTRRDDLTWNIVAAKEGLVAKGVDGENQLRAFVVSEDKMKEAFALLKQLVS.

Belongs to the FAD-dependent oxidoreductase family. Requires FAD as cofactor.

Its subcellular location is the cytoplasm. It catalyses the reaction 2 reduced [nitric oxide reductase rubredoxin domain] + NAD(+) + H(+) = 2 oxidized [nitric oxide reductase rubredoxin domain] + NADH. It functions in the pathway nitrogen metabolism; nitric oxide reduction. Functionally, one of at least two accessory proteins for anaerobic nitric oxide (NO) reductase. Reduces the rubredoxin moiety of NO reductase. In Klebsiella pneumoniae (strain 342), this protein is Nitric oxide reductase FlRd-NAD(+) reductase.